The chain runs to 272 residues: 4-diphosphocytidyl-2-C-methyl-D-erythritol kinase (272 aa).

The active site involves K14. 92-102 (PMGGGLGGGSS) serves as a coordination point for ATP. Residue D132 is part of the active site.

Belongs to the GHMP kinase family. IspE subfamily.

It carries out the reaction 4-CDP-2-C-methyl-D-erythritol + ATP = 4-CDP-2-C-methyl-D-erythritol 2-phosphate + ADP + H(+). It participates in isoprenoid biosynthesis; isopentenyl diphosphate biosynthesis via DXP pathway; isopentenyl diphosphate from 1-deoxy-D-xylulose 5-phosphate: step 3/6. Functionally, catalyzes the phosphorylation of the position 2 hydroxy group of 4-diphosphocytidyl-2C-methyl-D-erythritol. The protein is 4-diphosphocytidyl-2-C-methyl-D-erythritol kinase of Fervidobacterium nodosum (strain ATCC 35602 / DSM 5306 / Rt17-B1).